The following is a 241-amino-acid chain: Venom nerve growth factor (241 aa).

Positions 1 to 18 (MSMLCYTLIIAFLIGIWA) are cleaved as a signal peptide. Positions 19–122 (APKSEDNVPL…SLNRNIRAKR (104 aa)) are excised as a propeptide. 3 disulfides stabilise this stretch: Cys-136/Cys-201, Cys-179/Cys-229, and Cys-189/Cys-231. A glycan (N-linked (GlcNAc...) asparagine) is linked at Asn-145.

Belongs to the NGF-beta family. In terms of assembly, homodimer; non-covalently linked. As to expression, expressed by the venom gland.

It is found in the secreted. Functionally, nerve growth factor is important for the development and maintenance of the sympathetic and sensory nervous systems. It stimulates division and differentiation of sympathetic and embryonic sensory neurons as well as basal forebrain cholinergic neurons in the brain. Its relevance in the snake venom is not clear. However, it has been shown to inhibit metalloproteinase-dependent proteolysis of platelet glycoprotein Ib alpha, suggesting a metalloproteinase inhibition to prevent metalloprotease autodigestion and/or protection against prey proteases. Binds a lipid between the two protein chains in the homodimer. The lipid-bound form promotes histamine relase from mouse mast cells, contrary to the lipid-free form. This is Venom nerve growth factor from Crotalus durissus terrificus (South American rattlesnake).